Consider the following 246-residue polypeptide: Carboxy-S-adenosyl-L-methionine synthase (246 aa).

Residues tyrosine 39, 64–66 (GCS), 89–90 (DN), 117–118 (DI), asparagine 132, and arginine 199 contribute to the S-adenosyl-L-methionine site.

It belongs to the class I-like SAM-binding methyltransferase superfamily. Cx-SAM synthase family. Homodimer.

It catalyses the reaction prephenate + S-adenosyl-L-methionine = carboxy-S-adenosyl-L-methionine + 3-phenylpyruvate + H2O. In terms of biological role, catalyzes the conversion of S-adenosyl-L-methionine (SAM) to carboxy-S-adenosyl-L-methionine (Cx-SAM). In Enterobacter sp. (strain 638), this protein is Carboxy-S-adenosyl-L-methionine synthase.